Here is a 360-residue protein sequence, read N- to C-terminus: Peptide chain release factor 1 (360 aa).

At Q235 the chain carries N5-methylglutamine. Residues 284–312 (AKRQQAEASTRRNLLGSGDRSDRNRTYNF) are disordered.

The protein belongs to the prokaryotic/mitochondrial release factor family. Post-translationally, methylated by PrmC. Methylation increases the termination efficiency of RF1.

Its subcellular location is the cytoplasm. Peptide chain release factor 1 directs the termination of translation in response to the peptide chain termination codons UAG and UAA. This is Peptide chain release factor 1 from Escherichia coli O81 (strain ED1a).